The sequence spans 128 residues: Ribosome-binding factor A (128 aa).

It belongs to the RbfA family. As to quaternary structure, monomer. Binds 30S ribosomal subunits, but not 50S ribosomal subunits or 70S ribosomes.

The protein resides in the cytoplasm. Its function is as follows. One of several proteins that assist in the late maturation steps of the functional core of the 30S ribosomal subunit. Associates with free 30S ribosomal subunits (but not with 30S subunits that are part of 70S ribosomes or polysomes). Required for efficient processing of 16S rRNA. May interact with the 5'-terminal helix region of 16S rRNA. This chain is Ribosome-binding factor A, found in Herminiimonas arsenicoxydans.